The sequence spans 36 residues: Protein P4 (36 aa).

A helical membrane pass occupies residues 13 to 33 (GLQLSLLICACLLAVLIVSFC).

The protein localises to the host membrane. This chain is Protein P4, found in Vitis vinifera (Grape).